The primary structure comprises 502 residues: Putative ZDHHC-type palmitoyltransferase 3 (502 aa).

The tract at residues 1 to 80 (MVNNNNKNNK…ESTNENNKKL (80 aa)) is disordered. Residues 10 to 30 (KINDRENEENEKNKKKDKIYE) are compositionally biased toward basic and acidic residues. The span at 31–52 (NKIGINENNNENNNYQNENFIY) shows a compositional bias: low complexity. N-linked (GlcNAc...) asparagine glycosylation occurs at N58. The segment covering 59-73 (DTQEGDISEIQEEST) has biased composition (acidic residues). 2 helical membrane-spanning segments follow: residues 104–124 (FFIVTQIFILVPSLFFEIKLV) and 134–154 (LEISNYIITLTLLVFIFYNLY). Residues 200 to 281 (IANDDPISSS…NNNNNNNKNQ (82 aa)) form a disordered region. Over residues 203-212 (DDPISSSSDF) the composition is skewed to low complexity. Residues 213-222 (SDSDDDDQDE) are compositionally biased toward acidic residues. Residues 248–280 (NSNNNNSNNNNNNNKNRNRNNNNNNNNNNNNKN) show a composition bias toward low complexity. Residues N252 and N280 are each glycosylated (N-linked (GlcNAc...) asparagine). Residues 299–349 (KFCITCGLYREPRSFHCSTCNNCVENFDHHCVWIGNCIGRRNYREFFYFIT) enclose the DHHC domain. C329 functions as the S-palmitoyl cysteine intermediate in the catalytic mechanism. Residues 344 to 364 (FFYFITTTLIYALYLLSMSIV) traverse the membrane as a helical segment. N371, N388, and N393 each carry an N-linked (GlcNAc...) asparagine glycan. A helical membrane pass occupies residues 419 to 439 (GLCIFIIIFGFIMSLLLGFLV). 3 N-linked (GlcNAc...) asparagine glycosylation sites follow: N449, N483, and N494.

Belongs to the DHHC palmitoyltransferase family.

It is found in the membrane. The enzyme catalyses L-cysteinyl-[protein] + hexadecanoyl-CoA = S-hexadecanoyl-L-cysteinyl-[protein] + CoA. The protein is Putative ZDHHC-type palmitoyltransferase 3 of Dictyostelium discoideum (Social amoeba).